The following is a 419-amino-acid chain: UDP-N-acetylglucosamine 1-carboxyvinyltransferase 2 (419 aa).

Phosphoenolpyruvate is bound at residue 22–23 (KN). Arginine 92 contributes to the UDP-N-acetyl-alpha-D-glucosamine binding site. Cysteine 116 functions as the Proton donor in the catalytic mechanism. Position 116 is a 2-(S-cysteinyl)pyruvic acid O-phosphothioketal (cysteine 116). Residues 121 to 125 (RPIDL), aspartate 306, and isoleucine 328 contribute to the UDP-N-acetyl-alpha-D-glucosamine site.

The protein belongs to the EPSP synthase family. MurA subfamily.

The protein resides in the cytoplasm. It catalyses the reaction phosphoenolpyruvate + UDP-N-acetyl-alpha-D-glucosamine = UDP-N-acetyl-3-O-(1-carboxyvinyl)-alpha-D-glucosamine + phosphate. The protein operates within cell wall biogenesis; peptidoglycan biosynthesis. Functionally, cell wall formation. Adds enolpyruvyl to UDP-N-acetylglucosamine. In Streptococcus mutans serotype c (strain ATCC 700610 / UA159), this protein is UDP-N-acetylglucosamine 1-carboxyvinyltransferase 2.